Consider the following 594-residue polypeptide: UvrABC system protein C (594 aa).

Positions 14–91 constitute a GIY-YIG domain; that stretch reads DQPGCYLMKD…IKKHDPKYNI (78 aa). One can recognise a UVR domain in the interval 196-231; sequence KEVRSELETKMYEASEKLEFERAKELRDQIAHIDAI.

It belongs to the UvrC family. Interacts with UvrB in an incision complex.

It is found in the cytoplasm. Functionally, the UvrABC repair system catalyzes the recognition and processing of DNA lesions. UvrC both incises the 5' and 3' sides of the lesion. The N-terminal half is responsible for the 3' incision and the C-terminal half is responsible for the 5' incision. In Bacillus thuringiensis (strain Al Hakam), this protein is UvrABC system protein C.